Reading from the N-terminus, the 212-residue chain is Adenylate kinase (212 aa).

Position 10–15 (10–15 (GAGKGT)) interacts with ATP. The NMP stretch occupies residues 30 to 59 (STGDMFRAAMANQTEMGVLAKSYIDKGELV). AMP is bound by residues Thr-31, Arg-36, 57–59 (ELV), 86–89 (GYPR), and Gln-93. Residues 127–159 (GRIIHRVTGETFHKVFNPPVDYKEEDYYQREDD) are LID. ATP contacts are provided by residues Arg-128 and 137 to 138 (TF). The AMP site is built by Arg-156 and Arg-167. Gln-195 is a binding site for ATP.

Belongs to the adenylate kinase family. As to quaternary structure, monomer.

Its subcellular location is the cytoplasm. The catalysed reaction is AMP + ATP = 2 ADP. It functions in the pathway purine metabolism; AMP biosynthesis via salvage pathway; AMP from ADP: step 1/1. Its function is as follows. Catalyzes the reversible transfer of the terminal phosphate group between ATP and AMP. Plays an important role in cellular energy homeostasis and in adenine nucleotide metabolism. The polypeptide is Adenylate kinase (Streptococcus pneumoniae serotype 4 (strain ATCC BAA-334 / TIGR4)).